We begin with the raw amino-acid sequence, 225 residues long: Uracil-DNA glycosylase (225 aa).

D65 functions as the Proton acceptor in the catalytic mechanism.

This sequence belongs to the uracil-DNA glycosylase (UDG) superfamily. UNG family.

It localises to the cytoplasm. The enzyme catalyses Hydrolyzes single-stranded DNA or mismatched double-stranded DNA and polynucleotides, releasing free uracil.. Functionally, excises uracil residues from the DNA which can arise as a result of misincorporation of dUMP residues by DNA polymerase or due to deamination of cytosine. The sequence is that of Uracil-DNA glycosylase from Bacillus thuringiensis subsp. konkukian (strain 97-27).